We begin with the raw amino-acid sequence, 210 residues long: Tetraspanin-31 (210 aa).

The Cytoplasmic portion of the chain corresponds to 1–12 (MVCGGFACSRNA). A helical membrane pass occupies residues 13 to 33 (LCALNVVYMLVGFLLIGVAAW). Residues 34–44 (GKGLGVVSSIH) lie on the Extracellular side of the membrane. The chain crosses the membrane as a helical span at residues 45–65 (IIGGVIAVGVFLLLIAVAGLV). The Cytoplasmic portion of the chain corresponds to 66 to 72 (GAANHHQ). The helical transmembrane segment at 73 to 93 (VLLFFYMIILGLVFIFQFGIS) threads the bilayer. Residues 94 to 173 (CSCLAINRNT…FLKHSDKALK (80 aa)) are Extracellular-facing. N-linked (GlcNAc...) asparagine glycosylation is found at N109, N117, and N134. The helical transmembrane segment at 174–194 (ILGGVGLFFSFTEILGVWLAM) threads the bilayer. The Cytoplasmic segment spans residues 195–210 (RFRNQKDPRANPSAFL).

Belongs to the tetraspanin (TM4SF) family.

It is found in the membrane. This chain is Tetraspanin-31 (Tspan31), found in Mus musculus (Mouse).